Consider the following 1558-residue polypeptide: MIKNGTCPFWERDDLSECARREYIEFKFPLFILLTGMIYAFCKVFRAFYLRRKNHTNEAPEFEEQGNGNHEYARFSVLRLKSAWESRSFCNVNNRSTFDKFKKFIEGAFIVLQLTIHLYILSNMPMDNKKFFHQGFLVQMFLWILLLVVITLRLISASQSFRWVLACKRDLWAVSFYSYASLFTLSILPLRSVFIGKIKDKIMVKYIISETFIDLALLLLLSTSSIEGTRYSFLVENENKKLPPAPTVFGLLTFSRIDRLIWKAYKHCLGNADIWDLDINNKSIAILANFEMSSKKGRLLPNIICYFKAVFISQLFLAFVSSFLNFVPSLLMPRILSYVNDPKSQSWNLVSLYVSSMLVSKIIATTCRGQGLFLGEKGTMQLRTVLISNIYSKTLRRTILKDSTTSLQKNASTSFEENPDSSEAEPRKKSSRKDNSVNNVMSIDAFKVSEAMNTFYLACEAVFMTVTALMILYSLLGWSAFAGTFALLAMIPLNFWCATFYGNYQADQLILTDKRTSGISEALNSIRVIKLLAWENLFYQKIINVRDGEIRLLKKKATIFFLNHLIWFFGPTLVSAITFSVFIKFQNQTLTPTIAFTALSLFAILRTPMDQIASTVSLLIQSFISLERIQDYLNEPETRKYEILEQSNTKFGFEDASMEWEAAETSFKLKNISIDFKLNSLNAIIGPTGSGKSSLLLGLLGELNLLSGKIYVPTVESRDDLEIGKDGMTNSMAYCSQTPWLISGTIKDNVVFGEIFNKQKFDDVMKSCCLDKDIKAMTAGIRTDVGDGGFSLSGGQQQRIALARAIYSSSRYLILDDCLSAVDPETALYIYEECLCGPMMKGRTCIITSHNISLVTKRADWLVILDRGEVKSQGKPSDLIKSNEFLRESINNDSKNTTHNQIDLKRSTTSKKTKNGDPEGENSQDEVCAEVENFEETKMEGSVKFSAYKWLADYFGGLGVVFVFTSSAILIHGITLSQGFWLRYWLETGSSGSKSTWLYRIVEGHSNIYFILTYIVIGFVSSFLTSGKVWIAIISGTNVTKKIFAKLLSSILYAKLRFHNVTPTGRIMNRFSKDMDIIDQQLIPNFEGLSYSVVVCLWIILLIGYVTPQFLLFAIPLCALYYTVCTLYLRASRELKRIDNINISPIHQLFAEAIKGVTTIRALADERRFITQSLVAIDRSNAPFFYLNMATEWITYRVDIIGTLVLFSSSVMIIMKASYLDAGLAGILLSNAFSFTETAQWIIKVFSSVELLMSSVERIKEYTDIPSESNGYISPPANWPQTGDVELKNLSLRYSPHSSKALDNVSFKVKAGTKVGIVGRTGAGKSSIIAAIYRLSDWENGTIIIDNKDIKHIPLERLRNSISCIPQDPTLFDGTVRSNLDPFDRYSDVQIYGVLSKVGLIEECDELSLISEQEQPNFSSHKLRNRFIDLNTVVKSGGSNLSQGQRQLLCLARSMLGARNIMLIDEATASIDYISDAKIQKTIRETMKNTTILTIAHRLRSVIDYDKILVMEMGRVKEYDHPYTLISDRNTIFYRLCRQSGEFENLFELAKVSFDNKR.

Over 1 to 29 the chain is Extracellular; sequence MIKNGTCPFWERDDLSECARREYIEFKFP. N4 carries N-linked (GlcNAc...) asparagine glycosylation. A helical transmembrane segment spans residues 30-50; sequence LFILLTGMIYAFCKVFRAFYL. The Cytoplasmic portion of the chain corresponds to 51-103; the sequence is RRKNHTNEAPEFEEQGNGNHEYARFSVLRLKSAWESRSFCNVNNRSTFDKFKK. Residues 104–124 form a helical membrane-spanning segment; that stretch reads FIEGAFIVLQLTIHLYILSNM. The Extracellular portion of the chain corresponds to 125 to 130; that stretch reads PMDNKK. The helical transmembrane segment at 131-151 threads the bilayer; that stretch reads FFHQGFLVQMFLWILLLVVIT. The Cytoplasmic segment spans residues 152–169; it reads LRLISASQSFRWVLACKR. The chain crosses the membrane as a helical span at residues 170–190; sequence DLWAVSFYSYASLFTLSILPL. Over 191-201 the chain is Extracellular; sequence RSVFIGKIKDK. A helical membrane pass occupies residues 202 to 222; it reads IMVKYIISETFIDLALLLLLS. Topologically, residues 223–302 are cytoplasmic; it reads TSSIEGTRYS…SSKKGRLLPN (80 aa). The helical transmembrane segment at 303 to 323 threads the bilayer; it reads IICYFKAVFISQLFLAFVSSF. The region spanning 311 to 621 is the ABC transmembrane type-1 1 domain; the sequence is FISQLFLAFV…IASTVSLLIQ (311 aa). The Extracellular segment spans residues 324–351; it reads LNFVPSLLMPRILSYVNDPKSQSWNLVS. A helical transmembrane segment spans residues 352–374; that stretch reads LYVSSMLVSKIIATTCRGQGLFL. Topologically, residues 375–449 are cytoplasmic; the sequence is GEKGTMQLRT…VMSIDAFKVS (75 aa). The segment at 410-434 is disordered; it reads NASTSFEENPDSSEAEPRKKSSRKD. The span at 424–434 shows a compositional bias: basic and acidic residues; it reads AEPRKKSSRKD. Residues 450-470 form a helical membrane-spanning segment; sequence EAMNTFYLACEAVFMTVTALM. At 471 to 481 the chain is on the extracellular side; that stretch reads ILYSLLGWSAF. The helical transmembrane segment at 482-504 threads the bilayer; the sequence is AGTFALLAMIPLNFWCATFYGNY. At 505-558 the chain is on the cytoplasmic side; sequence QADQLILTDKRTSGISEALNSIRVIKLLAWENLFYQKIINVRDGEIRLLKKKAT. A helical transmembrane segment spans residues 559–579; the sequence is IFFLNHLIWFFGPTLVSAITF. Topologically, residues 580–584 are extracellular; it reads SVFIK. Residues 585–605 traverse the membrane as a helical segment; that stretch reads FQNQTLTPTIAFTALSLFAIL. The Cytoplasmic portion of the chain corresponds to 606–953; that stretch reads RTPMDQIAST…KFSAYKWLAD (348 aa). Residues 651–892 enclose the ABC transporter 1 domain; sequence FGFEDASMEW…NEFLRESINN (242 aa). 686–693 is an ATP binding site; it reads GPTGSGKS. A compositionally biased stretch (polar residues) spans 892-901; it reads NDSKNTTHNQ. Residues 892 to 926 form a disordered region; that stretch reads NDSKNTTHNQIDLKRSTTSKKTKNGDPEGENSQDE. A helical membrane pass occupies residues 954–974; it reads YFGGLGVVFVFTSSAILIHGI. The ABC transmembrane type-1 2 domain occupies 961 to 1251; that stretch reads VFVFTSSAIL…IIKVFSSVEL (291 aa). At 975-1013 the chain is on the extracellular side; it reads TLSQGFWLRYWLETGSSGSKSTWLYRIVEGHSNIYFILT. The helical transmembrane segment at 1014–1034 threads the bilayer; that stretch reads YIVIGFVSSFLTSGKVWIAII. The Cytoplasmic segment spans residues 1035–1082; that stretch reads SGTNVTKKIFAKLLSSILYAKLRFHNVTPTGRIMNRFSKDMDIIDQQL. Residues 1083–1105 traverse the membrane as a helical segment; that stretch reads IPNFEGLSYSVVVCLWIILLIGY. Over 1106-1109 the chain is Extracellular; that stretch reads VTPQ. A helical transmembrane segment spans residues 1110–1132; it reads FLLFAIPLCALYYTVCTLYLRAS. The Cytoplasmic segment spans residues 1133-1199; that stretch reads RELKRIDNIN…ATEWITYRVD (67 aa). The helical transmembrane segment at 1200–1220 threads the bilayer; it reads IIGTLVLFSSSVMIIMKASYL. Over 1221–1222 the chain is Extracellular; it reads DA. The chain crosses the membrane as a helical span at residues 1223–1243; that stretch reads GLAGILLSNAFSFTETAQWII. At 1244–1558 the chain is on the cytoplasmic side; it reads KVFSSVELLM…LAKVSFDNKR (315 aa). The 254-residue stretch at 1285-1538 folds into the ABC transporter 2 domain; it reads VELKNLSLRY…RNTIFYRLCR (254 aa). An ATP-binding site is contributed by 1319-1326; the sequence is GRTGAGKS.

Belongs to the ABC transporter superfamily. ABCC family. Conjugate transporter (TC 3.A.1.208) subfamily.

The protein resides in the membrane. The protein is ABC transporter NFT1 (NFT1) of Saccharomyces cerevisiae (strain YJM789) (Baker's yeast).